A 376-amino-acid chain; its full sequence is TATA box-binding protein-like 2 (376 aa).

Residues 103–184 form a disordered region; it reads PDEVTQENKD…SDSLSLASIT (82 aa). A compositionally biased stretch (basic and acidic residues) spans 108 to 122; the sequence is QENKDQPVISKHETE. Positions 126–159 are enriched in low complexity; that stretch reads ESQSPQSRLPSPSEQDVGLGLNSSSLSNSHSQLH. Residues 175 to 184 show a composition bias toward polar residues; sequence SDSLSLASIT.

It belongs to the TBP family. As to quaternary structure, interacts with TAF3.

Its subcellular location is the cytoplasm. The protein resides in the nucleus. Transcription factor required in complex with TAF3 for the differentiation of myoblasts into myocytes. The complex replaces TFIID at specific promoters at an early stage in the differentiation process. The sequence is that of TATA box-binding protein-like 2 from Pan troglodytes (Chimpanzee).